A 794-amino-acid polypeptide reads, in one-letter code: Protein argonaute-4 (794 aa).

The region spanning 152-271 (PIIEFMCEVL…LPLEVCNIVA (120 aa)) is the PAZ domain. A Piwi domain is found at 442–753 (LIVVILPGKT…VAFRARYHLV (312 aa)). The disordered stretch occupies residues 758 to 779 (DSAEGSHVSGQSNGRDPQALAK).

This sequence belongs to the argonaute family. Ago subfamily.

Its subcellular location is the cytoplasm. The protein localises to the P-body. In terms of biological role, required for RNA-mediated gene silencing (RNAi). Binds to short RNAs such as microRNAs (miRNAs) and represses the translation of mRNAs which are complementary to them. Lacks endonuclease activity and does not appear to cleave target mRNAs. The sequence is that of Protein argonaute-4 (AGO4) from Gallus gallus (Chicken).